A 591-amino-acid chain; its full sequence is MAAQVSHTVLRLEAEDVRNLKDGINFQKNNKDGKCYIIYKANGELRACRNQCKHQGGLFIKDIEDMDGRTVRCTKHYWKLNVATMQYVNPPDSFMQDELEAVLSETDGSLELLELNPPDPWTAEPREAQDLQAGEITLTYITHACMELKAGERRMMFDPWLTGPAFARGWWLLHEPPKDAMDRLMEADLVYISHMHSDHLSYPTLQHLSKKRPDIPIYVGNTSRPVFWYLEKSGVNLTNINVVPFGVWQNVDDHLRFMILMDGVHPEMDTCLIVEYKGHMILNTVDCTRPNNGRLPHGVDVMMSDFAGGASGFPMTFHGGKYTESWKANFIKNERKKLLNYKAQLVKSLQPKIYCPFAGYFTEAHPSDRYIKETNTKNSPAELNELIRKSCLNTLTWTPLPGSVLDLAVALNNRSNETAITDPPHGTKIYKDNWEFDLYLNQLNASISAEIFKHKHWIQYYYNWAGFRNYNLVIRVIETDDDFQPLNGGFDYLVDFLDLSFPTERPEREHAYEEIKNRVNVMRHVVVNGLLWDDLYIGFNNRMSRDPDVYHHKFWNHFQTELPLSAPDWQHFLQICSQTQENGSSNGCSVS.

Residues leucine 12–leucine 110 enclose the Rieske domain. Residues cysteine 52, histidine 54, cysteine 73, and histidine 76 each coordinate [2Fe-2S] cluster.

Belongs to the CMP-Neu5Ac hydroxylase family. [2Fe-2S] cluster is required as a cofactor.

The protein resides in the cytoplasm. The catalysed reaction is CMP-N-acetyl-beta-neuraminate + 2 Fe(II)-[cytochrome b5] + O2 + 2 H(+) = CMP-N-glycoloyl-beta-neuraminate + 2 Fe(III)-[cytochrome b5] + H2O. It functions in the pathway amino-sugar metabolism; N-acetylneuraminate metabolism. In terms of biological role, sialic acids are components of carbohydrate chains of glycoconjugates and are involved in cell-cell recognition and cell-pathogen interactions. Catalyzes the conversion of CMP-N-acetylneuraminic acid (CMP-Neu5Ac) into its hydroxylated derivative CMP-N-glycolylneuraminic acid (CMP-Neu5Gc), a sialic acid abundantly expressed at the surface of many cells. The protein is Cytidine monophosphate-N-acetylneuraminic acid hydroxylase (cmah) of Danio rerio (Zebrafish).